The following is a 262-amino-acid chain: Kallikrein-1 (262 aa).

The N-terminal stretch at 1–18 (MWFLVLCLALSLGGTGAA) is a signal peptide. A propeptide spans 19–24 (PPIQSR) (activation peptide). Residues 25–259 (IVGGWECEQH…YVKWIEDTIA (235 aa)) enclose the Peptidase S1 domain. Cystine bridges form between Cys-31–Cys-174, Cys-50–Cys-66, Cys-153–Cys-220, Cys-185–Cys-199, and Cys-210–Cys-235. His-65 (charge relay system) is an active-site residue. Residue Ser-93 is glycosylated (O-linked (GalNAc...) serine). Asn-102 carries N-linked (GlcNAc...) asparagine glycosylation. An O-linked (GalNAc...) serine glycan is attached at Ser-104. The N-linked (GlcNAc...) asparagine glycan is linked to Asn-108. The active-site Charge relay system is Asp-120. Residue Asn-165 is glycosylated (N-linked (GlcNAc...) asparagine; partial). Residue Ser-167 is glycosylated (O-linked (GalNAc...) serine). The active-site Charge relay system is the Ser-214.

Belongs to the peptidase S1 family. Kallikrein subfamily. The O-linked polysaccharides on Ser-93, Ser-104 and Ser-167 are probably the mucin type linked to GalNAc. In PubMed:3163150, GalNAc was detected with the corresponding peptides but not located. Isoform 2 is expressed in pancreas, salivary glands, kidney, colon, prostate gland, testis, spleen and the colon adenocarcinoma cell line T84.

The catalysed reaction is Preferential cleavage of Arg-|-Xaa bonds in small molecule substrates. Highly selective action to release kallidin (lysyl-bradykinin) from kininogen involves hydrolysis of Met-|-Xaa or Leu-|-Xaa.. Functionally, glandular kallikreins cleave Met-Lys and Arg-Ser bonds in kininogen to release Lys-bradykinin. Its function is as follows. (Microbial infection) Cleaves Neisseria meningitidis NHBA in saliva; Neisseria is an obligate commensal of the nasopharyngeal mucosa. The polypeptide is Kallikrein-1 (KLK1) (Homo sapiens (Human)).